The sequence spans 386 residues: Antilisterial bacteriocin subtilosin biosynthesis protein AlbE (386 aa).

Its function is as follows. Involved in the production of the bacteriocin subtilosin. This Bacillus subtilis protein is Antilisterial bacteriocin subtilosin biosynthesis protein AlbE (albE).